A 268-amino-acid polypeptide reads, in one-letter code: MNQMNPAFVMPDVQSTPDTRQIPIQRVGVKAVRHPLTVRTQGGEVQPTVGTWNLDVHLPADQKGTHMSRFVALLEENKAPLEPATFRTMLAAMLEKLEAEAGRIEVSFPYFVNKTAPVSGVQSLLDYEVTLTGETRNGATRLFLRVRVPVTSLCPCSKKISQYGAHNQRSHVTINAELAGDVAVEELIRIAEEEASCELWGLLKRPDEKFVTERAYENPKFVEDLVRDVAQRLNADERIVAYVLEAENFESIHNHSAYAVIERDKRAG.

The protein belongs to the GTP cyclohydrolase IV family.

It catalyses the reaction GTP + H2O = 7,8-dihydroneopterin 3'-triphosphate + formate + H(+). It participates in cofactor biosynthesis; 7,8-dihydroneopterin triphosphate biosynthesis; 7,8-dihydroneopterin triphosphate from GTP: step 1/1. In terms of biological role, converts GTP to 7,8-dihydroneopterin triphosphate. The protein is GTP cyclohydrolase FolE2 of Paraburkholderia xenovorans (strain LB400).